A 413-amino-acid chain; its full sequence is Multifunctional CCA protein (413 aa).

ATP-binding residues include G8 and R11. CTP-binding residues include G8 and R11. D21 and D23 together coordinate Mg(2+). ATP-binding residues include R91, R143, and R146. CTP is bound by residues R91, R143, and R146. An HD domain is found at 232 to 333; that stretch reads TGVHVMMVVD…VRLFERSDAL (102 aa).

It belongs to the tRNA nucleotidyltransferase/poly(A) polymerase family. Bacterial CCA-adding enzyme type 1 subfamily. Monomer. Can also form homodimers and oligomers. Requires Mg(2+) as cofactor. Ni(2+) serves as cofactor.

The catalysed reaction is a tRNA precursor + 2 CTP + ATP = a tRNA with a 3' CCA end + 3 diphosphate. It catalyses the reaction a tRNA with a 3' CCA end + 2 CTP + ATP = a tRNA with a 3' CCACCA end + 3 diphosphate. Its function is as follows. Catalyzes the addition and repair of the essential 3'-terminal CCA sequence in tRNAs without using a nucleic acid template. Adds these three nucleotides in the order of C, C, and A to the tRNA nucleotide-73, using CTP and ATP as substrates and producing inorganic pyrophosphate. tRNA 3'-terminal CCA addition is required both for tRNA processing and repair. Also involved in tRNA surveillance by mediating tandem CCA addition to generate a CCACCA at the 3' terminus of unstable tRNAs. While stable tRNAs receive only 3'-terminal CCA, unstable tRNAs are marked with CCACCA and rapidly degraded. This chain is Multifunctional CCA protein, found in Burkholderia cenocepacia (strain ATCC BAA-245 / DSM 16553 / LMG 16656 / NCTC 13227 / J2315 / CF5610) (Burkholderia cepacia (strain J2315)).